Reading from the N-terminus, the 132-residue chain is MARKEFRYRGYTLEQLMNMSLEELARLLPARQRRSLRRGLTPEQKKLLRKIRLAKKGKYNKPIRTHCRDMIILPEMVGLTIYVHNGKEFVPVEIKPEMIGHYLGEFAPTRKRVQHGAPGIGATRSSMFVAVK.

It belongs to the universal ribosomal protein uS19 family.

Protein S19 forms a complex with S13 that binds strongly to the 16S ribosomal RNA. The protein is Small ribosomal subunit protein uS19 (rps19) of Pyrococcus horikoshii (strain ATCC 700860 / DSM 12428 / JCM 9974 / NBRC 100139 / OT-3).